A 256-amino-acid chain; its full sequence is Trans-aconitate 2-methyltransferase (256 aa).

The protein belongs to the methyltransferase superfamily. Tam family.

It is found in the cytoplasm. The enzyme catalyses trans-aconitate + S-adenosyl-L-methionine = (E)-3-(methoxycarbonyl)pent-2-enedioate + S-adenosyl-L-homocysteine. Functionally, catalyzes the S-adenosylmethionine monomethyl esterification of trans-aconitate. This Rhizobium etli (strain ATCC 51251 / DSM 11541 / JCM 21823 / NBRC 15573 / CFN 42) protein is Trans-aconitate 2-methyltransferase.